Reading from the N-terminus, the 236-residue chain is MKTIVVCSGGLDSVSLAHRTASEEQLIGLVSFDYGQRHRKELDFAAKCAARLAVPHHIIDIAAIGGHLSGSALTDNVEVPDGHYAEETMKATVVPNRNAIMLAIAFGLAAAQKADAVAVAVHGGDHFIYPDCRPGFIDAFQRMQNEALDGYASVKLLAPYVEVSKAAIVADGTRHGTPFAETWSCYKGGSLHCGRCGTCVERREAFHLAGVSDPTEYEDRDFWKAAASQYSAAEVR.

An ATP-binding site is contributed by 7–17; it reads CSGGLDSVSLA. Zn(2+) is bound by residues C185, C193, C196, and C199.

This sequence belongs to the QueC family. Requires Zn(2+) as cofactor.

It carries out the reaction 7-carboxy-7-deazaguanine + NH4(+) + ATP = 7-cyano-7-deazaguanine + ADP + phosphate + H2O + H(+). Its pathway is purine metabolism; 7-cyano-7-deazaguanine biosynthesis. In terms of biological role, catalyzes the ATP-dependent conversion of 7-carboxy-7-deazaguanine (CDG) to 7-cyano-7-deazaguanine (preQ(0)). This chain is 7-cyano-7-deazaguanine synthase, found in Rhizobium etli (strain ATCC 51251 / DSM 11541 / JCM 21823 / NBRC 15573 / CFN 42).